A 680-amino-acid polypeptide reads, in one-letter code: DNA-directed RNA polymerase subunit beta' (680 aa).

Positions 69, 71, 87, and 90 each coordinate Zn(2+). The Mg(2+) site is built by aspartate 489, aspartate 491, and aspartate 493.

Belongs to the RNA polymerase beta' chain family. RpoC1 subfamily. As to quaternary structure, in plastids the minimal PEP RNA polymerase catalytic core is composed of four subunits: alpha, beta, beta', and beta''. When a (nuclear-encoded) sigma factor is associated with the core the holoenzyme is formed, which can initiate transcription. Mg(2+) is required as a cofactor. The cofactor is Zn(2+).

Its subcellular location is the plastid. The protein resides in the chloroplast. The catalysed reaction is RNA(n) + a ribonucleoside 5'-triphosphate = RNA(n+1) + diphosphate. Its function is as follows. DNA-dependent RNA polymerase catalyzes the transcription of DNA into RNA using the four ribonucleoside triphosphates as substrates. The sequence is that of DNA-directed RNA polymerase subunit beta' from Nandina domestica (Heavenly bamboo).